The primary structure comprises 211 residues: FMN-dependent NADH:quinone oxidoreductase 3 (211 aa).

102-105 (MWNF) contacts FMN.

This sequence belongs to the azoreductase type 1 family. As to quaternary structure, homodimer. The cofactor is FMN.

The catalysed reaction is 2 a quinone + NADH + H(+) = 2 a 1,4-benzosemiquinone + NAD(+). The enzyme catalyses N,N-dimethyl-1,4-phenylenediamine + anthranilate + 2 NAD(+) = 2-(4-dimethylaminophenyl)diazenylbenzoate + 2 NADH + 2 H(+). Quinone reductase that provides resistance to thiol-specific stress caused by electrophilic quinones. Functionally, also exhibits azoreductase activity. Catalyzes the reductive cleavage of the azo bond in aromatic azo compounds to the corresponding amines. This Bacillus anthracis protein is FMN-dependent NADH:quinone oxidoreductase 3.